A 360-amino-acid chain; its full sequence is Probable L-asparaginase 1 (360 aa).

An N-terminal signal peptide occupies residues 1 to 16 (MWRSIISFLFFSVALC). N-linked (GlcNAc...) asparagine glycosylation is found at Asn27, Asn35, and Asn40. The region spanning 39–359 (PNVTIFAMGG…QNITDIFSLE (321 aa)) is the Asparaginase/glutaminase domain. Residue Thr49 is the O-isoaspartyl threonine intermediate of the active site. An N-linked (GlcNAc...) asparagine glycan is attached at Asn82. A substrate-binding site is contributed by Ser96. The N-linked (GlcNAc...) asparagine glycan is linked to Asn106. 129–130 (TD) is a substrate binding site. 5 N-linked (GlcNAc...) asparagine glycosylation sites follow: Asn144, Asn179, Asn246, Asn302, and Asn351.

It belongs to the asparaginase 1 family.

It localises to the secreted. The protein localises to the cell wall. It catalyses the reaction L-asparagine + H2O = L-aspartate + NH4(+). In Schizosaccharomyces pombe (strain 972 / ATCC 24843) (Fission yeast), this protein is Probable L-asparaginase 1.